Reading from the N-terminus, the 137-residue chain is Small ribosomal subunit protein uS12 (137 aa).

The tract at residues 1–55 (MPTINQLVRKPRKSKVEKSDSPALNKGYNSFKKTQTNVNSPQKRGVCTRVGTMTP) is disordered. Residues 27-42 (GYNSFKKTQTNVNSPQ) are compositionally biased toward polar residues. A 3-methylthioaspartic acid modification is found at Asp-102.

Belongs to the universal ribosomal protein uS12 family. As to quaternary structure, part of the 30S ribosomal subunit. Contacts proteins S8 and S17. May interact with IF1 in the 30S initiation complex.

Its function is as follows. With S4 and S5 plays an important role in translational accuracy. Interacts with and stabilizes bases of the 16S rRNA that are involved in tRNA selection in the A site and with the mRNA backbone. Located at the interface of the 30S and 50S subunits, it traverses the body of the 30S subunit contacting proteins on the other side and probably holding the rRNA structure together. The combined cluster of proteins S8, S12 and S17 appears to hold together the shoulder and platform of the 30S subunit. The chain is Small ribosomal subunit protein uS12 from Enterococcus faecalis (strain ATCC 700802 / V583).